Here is a 113-residue protein sequence, read N- to C-terminus: Transcription initiation factor IIA subunit 2 (113 aa).

Belongs to the TFIIA subunit 2 family. TFIIA is a heterodimer of the large unprocessed subunit 1 and a small subunit gamma. It was originally believed to be a heterotrimer of an alpha, a beta and a gamma subunit.

It localises to the nucleus. In terms of biological role, TFIIA is a component of the transcription machinery of RNA polymerase II and plays an important role in transcriptional activation. TFIIA in a complex with TBP mediates transcriptional activity. The protein is Transcription initiation factor IIA subunit 2 of Caenorhabditis elegans.